The following is a 263-amino-acid chain: Glucosamine-6-phosphate deaminase (263 aa).

The active-site Proton acceptor; for enolization step is the aspartate 67. Asparagine 136 functions as the For ring-opening step in the catalytic mechanism. Residue histidine 138 is the Proton acceptor; for ring-opening step of the active site. Glutamate 143 serves as the catalytic For ring-opening step.

This sequence belongs to the glucosamine/galactosamine-6-phosphate isomerase family. NagB subfamily. As to quaternary structure, homohexamer.

The enzyme catalyses alpha-D-glucosamine 6-phosphate + H2O = beta-D-fructose 6-phosphate + NH4(+). The protein operates within amino-sugar metabolism; N-acetylneuraminate degradation; D-fructose 6-phosphate from N-acetylneuraminate: step 5/5. Functionally, catalyzes the reversible isomerization-deamination of glucosamine 6-phosphate (GlcN6P) to form fructose 6-phosphate (Fru6P) and ammonium ion. The chain is Glucosamine-6-phosphate deaminase from Shewanella halifaxensis (strain HAW-EB4).